A 253-amino-acid chain; its full sequence is NADH-quinone oxidoreductase subunit C (253 aa).

Disordered regions lie at residues 1 to 33 (MSPD…DTEP) and 234 to 253 (IPVE…RAYS).

Belongs to the complex I 30 kDa subunit family. In terms of assembly, NDH-1 is composed of 14 different subunits. Subunits NuoB, C, D, E, F, and G constitute the peripheral sector of the complex.

The protein resides in the cell membrane. The catalysed reaction is a quinone + NADH + 5 H(+)(in) = a quinol + NAD(+) + 4 H(+)(out). In terms of biological role, NDH-1 shuttles electrons from NADH, via FMN and iron-sulfur (Fe-S) centers, to quinones in the respiratory chain. The immediate electron acceptor for the enzyme in this species is believed to be a menaquinone. Couples the redox reaction to proton translocation (for every two electrons transferred, four hydrogen ions are translocated across the cytoplasmic membrane), and thus conserves the redox energy in a proton gradient. This is NADH-quinone oxidoreductase subunit C from Nocardia farcinica (strain IFM 10152).